The sequence spans 154 residues: Aspartate carbamoyltransferase regulatory chain (154 aa).

Residues Cys109, Cys114, Cys138, and Cys141 each contribute to the Zn(2+) site.

This sequence belongs to the PyrI family. Contains catalytic and regulatory chains. Zn(2+) is required as a cofactor.

Involved in allosteric regulation of aspartate carbamoyltransferase. This is Aspartate carbamoyltransferase regulatory chain from Aeromonas hydrophila subsp. hydrophila (strain ATCC 7966 / DSM 30187 / BCRC 13018 / CCUG 14551 / JCM 1027 / KCTC 2358 / NCIMB 9240 / NCTC 8049).